The sequence spans 197 residues: Imidazoleglycerol-phosphate dehydratase (197 aa).

The protein belongs to the imidazoleglycerol-phosphate dehydratase family.

It is found in the cytoplasm. The catalysed reaction is D-erythro-1-(imidazol-4-yl)glycerol 3-phosphate = 3-(imidazol-4-yl)-2-oxopropyl phosphate + H2O. The protein operates within amino-acid biosynthesis; L-histidine biosynthesis; L-histidine from 5-phospho-alpha-D-ribose 1-diphosphate: step 6/9. This chain is Imidazoleglycerol-phosphate dehydratase, found in Cellvibrio japonicus (strain Ueda107) (Pseudomonas fluorescens subsp. cellulosa).